We begin with the raw amino-acid sequence, 567 residues long: Laccase-7 (567 aa).

Residues 1 to 23 (MEGVRVPIACALILLAISSITSA) form the signal peptide. Plastocyanin-like domains follow at residues 31–147 (NVQN…PKSG) and 157–310 (KEVP…YGGA). 3 N-linked (GlcNAc...) asparagine glycosylation sites follow: asparagine 34, asparagine 50, and asparagine 77. Residues histidine 81 and histidine 83 each contribute to the Cu cation site. Asparagine 115 carries an N-linked (GlcNAc...) asparagine glycan. Cu cation-binding residues include histidine 126 and histidine 128. Asparagine 186, asparagine 298, asparagine 339, asparagine 374, asparagine 386, asparagine 427, and asparagine 450 each carry an N-linked (GlcNAc...) asparagine glycan. The 140-residue stretch at 412-551 (DFPDQPPVKF…GMIFVVKNGP (140 aa)) folds into the Plastocyanin-like 3 domain. The Cu cation site is built by histidine 468, histidine 471, histidine 473, histidine 530, cysteine 531, histidine 532, and histidine 536.

It belongs to the multicopper oxidase family. The cofactor is Cu cation. As to expression, predominantly expressed in tissues other than the inflorescence stem.

The protein localises to the secreted. It localises to the extracellular space. The protein resides in the apoplast. It catalyses the reaction 4 hydroquinone + O2 = 4 benzosemiquinone + 2 H2O. In terms of biological role, lignin degradation and detoxification of lignin-derived products. The chain is Laccase-7 (LAC7) from Arabidopsis thaliana (Mouse-ear cress).